Consider the following 79-residue polypeptide: MPKRILQGVVVSDKSDKTVVVKVERRYSHPLLKKTVRQSKKYKAHDENNQFKIGDQISIQESKPISKDKRWIVVKDSVA.

Belongs to the universal ribosomal protein uS17 family. As to quaternary structure, part of the 30S ribosomal subunit.

Its function is as follows. One of the primary rRNA binding proteins, it binds specifically to the 5'-end of 16S ribosomal RNA. In Bartonella quintana (strain Toulouse) (Rochalimaea quintana), this protein is Small ribosomal subunit protein uS17.